The sequence spans 351 residues: Tryptophan--tRNA ligase (351 aa).

ATP-binding positions include 11–13 (RPT) and 19–20 (GH). Residues 12–20 (PTGALHLGH) carry the 'HIGH' region motif. D139 contacts L-tryptophan. Residues 151–153 (GRD), L190, and 198–202 (KMSKS) contribute to the ATP site. The 'KMSKS' region signature appears at 198–202 (KMSKS).

The protein belongs to the class-I aminoacyl-tRNA synthetase family. Homodimer.

The protein resides in the cytoplasm. The catalysed reaction is tRNA(Trp) + L-tryptophan + ATP = L-tryptophyl-tRNA(Trp) + AMP + diphosphate + H(+). In terms of biological role, catalyzes the attachment of tryptophan to tRNA(Trp). The protein is Tryptophan--tRNA ligase of Borreliella burgdorferi (strain ATCC 35210 / DSM 4680 / CIP 102532 / B31) (Borrelia burgdorferi).